The sequence spans 181 residues: MRIVLLGPPGAGKGTQAAKLADKLGVPHISTGDLFRDNITNETELGVEAKRYLDAGDLVPSSLTNALVEDRIDQDDAKNGFILDGYPRSVEQAEALGDMLAARNLSLDAVIEFRVSEDELLSRLKGRGRADDTEEVILNRMKVYRDETAPLLDHYRAELKTVDAVGSLDEVFARALQALGR.

Position 10-15 (Gly-10–Thr-15) interacts with ATP. The NMP stretch occupies residues Ser-30–Val-59. AMP is bound by residues Thr-31, Arg-36, Asp-57–Val-59, Gly-85–Arg-88, and Gln-92. Residues Gly-126–Asp-132 form an LID region. Residue Arg-127 participates in ATP binding. AMP contacts are provided by Arg-129 and Arg-140. An ATP-binding site is contributed by Gly-166.

This sequence belongs to the adenylate kinase family. Monomer.

It is found in the cytoplasm. It carries out the reaction AMP + ATP = 2 ADP. It participates in purine metabolism; AMP biosynthesis via salvage pathway; AMP from ADP: step 1/1. Its function is as follows. Catalyzes the reversible transfer of the terminal phosphate group between ATP and AMP. Plays an important role in cellular energy homeostasis and in adenine nucleotide metabolism. The protein is Adenylate kinase of Mycobacterium sp. (strain MCS).